A 184-amino-acid polypeptide reads, in one-letter code: Putative tetraheme cytochrome-c type (184 aa).

The Cytoplasmic segment spans residues 1 to 14 (MSKHAASSAKRFSL). Residues 15–35 (LALGLMFVGGIVFVWAVDFGI) form a helical membrane-spanning segment. Over 36 to 184 (KTTNTLEFCT…HEPTEPDDAS (149 aa)) the chain is Periplasmic. Residues Cys-44, Cys-47, Met-50, Cys-73, Cys-76, and His-77 each contribute to the heme site. 2 residues coordinate substrate: Lys-89 and Asp-95. 8 residues coordinate heme: Asp-95, Cys-133, Cys-136, His-137, Cys-165, Cys-168, His-169, and His-174.

It belongs to the NapC/NirT/NrfH family. Binds 4 heme groups per subunit.

Its subcellular location is the cell inner membrane. This chain is Putative tetraheme cytochrome-c type, found in Allochromatium vinosum (strain ATCC 17899 / DSM 180 / NBRC 103801 / NCIMB 10441 / D) (Chromatium vinosum).